Consider the following 159-residue polypeptide: Small ribosomal subunit protein uS9 (159 aa).

The protein belongs to the universal ribosomal protein uS9 family.

The polypeptide is Small ribosomal subunit protein uS9 (Methylocella silvestris (strain DSM 15510 / CIP 108128 / LMG 27833 / NCIMB 13906 / BL2)).